A 207-amino-acid chain; its full sequence is Fibronectin type III domain-containing protein 5b (207 aa).

Residues 1-26 form the signal peptide; sequence MWGIKGSFAVLLLLFLAYIFASSVNA. Residues 27-146 are Extracellular-facing; sequence DSLSAPLNVT…EEVGQAAQLR (120 aa). The region spanning 31–122 is the Fibronectin type-III domain; that stretch reads APLNVTIKAL…EPVLFRTPKE (92 aa). 2 N-linked (GlcNAc...) asparagine glycosylation sites follow: Asn-34 and Asn-79. Residues 147 to 167 traverse the membrane as a helical segment; it reads AGELIIIVVVLVMWAGVIALF. Residues 168-207 lie on the Cytoplasmic side of the membrane; sequence CRQYDIIKDNEPNNNKDKAKNSSECSTPEHPTGGLLRSKV. Basic and acidic residues predominate over residues 178–188; sequence EPNNNKDKAKN. Positions 178 to 207 are disordered; it reads EPNNNKDKAKNSSECSTPEHPTGGLLRSKV. The Microbody targeting signal motif lies at 205 to 207; sequence SKV.

In terms of assembly, dimer; may exist in other oligomeric forms. Post-translationally, the extracellular domain is cleaved and released from the cell membrane.

The protein localises to the cell membrane. It is found in the peroxisome membrane. Its subcellular location is the secreted. Its function is as follows. May mediate beneficial effects of muscular exercise. This Danio rerio (Zebrafish) protein is Fibronectin type III domain-containing protein 5b (fndc5b).